A 178-amino-acid chain; its full sequence is ATP-dependent protease subunit HslV (178 aa).

T5 is a catalytic residue. G161, C164, and T167 together coordinate Na(+).

It belongs to the peptidase T1B family. HslV subfamily. A double ring-shaped homohexamer of HslV is capped on each side by a ring-shaped HslU homohexamer. The assembly of the HslU/HslV complex is dependent on binding of ATP.

It localises to the cytoplasm. The catalysed reaction is ATP-dependent cleavage of peptide bonds with broad specificity.. Allosterically activated by HslU binding. Its function is as follows. Protease subunit of a proteasome-like degradation complex believed to be a general protein degrading machinery. The polypeptide is ATP-dependent protease subunit HslV (Aliarcobacter butzleri (strain RM4018) (Arcobacter butzleri)).